The sequence spans 340 residues: MIFIDACFRKPTPYTPIWLMRQAGRYLSEYKQTRTKAGSFLSLCKNVELATEVTLQPVEILDVDAAILFSDILVVPLEMGLPLEFLAGEGPKFNRTISNVSDVVNLQEGAHKRLTYVYDTLSSIRSKLPKEKALIGFCGSPWTLATYMIEGQGSKTYAKSKAMLYKEPYILKTLLETLSEELKLYLEGQIRAGANAVQIFDSWASALECEVYFEFSWKYMKDIAQYIKGKYPHIPVMLFPKGIAGYLDKIDGCFDVFGVDWGTPMALAKSYLGTKYVLQGNLEPSRLYDKESMERGIDEILKIMGKEKGHIFNLGHGMLPDLPRENAIALVQMVREKSKR.

Residues 21 to 25 (RQAGR), F40, D71, Y147, S202, and H316 contribute to the substrate site.

The protein belongs to the uroporphyrinogen decarboxylase family. In terms of assembly, homodimer.

Its subcellular location is the cytoplasm. The catalysed reaction is uroporphyrinogen III + 4 H(+) = coproporphyrinogen III + 4 CO2. It participates in porphyrin-containing compound metabolism; protoporphyrin-IX biosynthesis; coproporphyrinogen-III from 5-aminolevulinate: step 4/4. Catalyzes the decarboxylation of four acetate groups of uroporphyrinogen-III to yield coproporphyrinogen-III. The chain is Uroporphyrinogen decarboxylase from Helicobacter hepaticus (strain ATCC 51449 / 3B1).